A 537-amino-acid chain; its full sequence is Phosphoenolpyruvate carboxykinase (ATP) (537 aa).

Arg61, Tyr195, and Lys201 together coordinate substrate. ATP contacts are provided by residues Lys201, His220, and 236 to 244 (GLSGTGKTT). Mn(2+) is bound by residues Lys201 and His220. Residue Asp257 participates in Mn(2+) binding. An ATP-binding site is contributed by Glu285. Over residues 311-321 (PDFDNGSKTEN) the composition is skewed to basic and acidic residues. The segment at 311–342 (PDFDNGSKTENTRSAYPLESIPNASPTGRAGQ) is disordered. Arg323 provides a ligand contact to substrate. The ATP site is built by Arg323 and Thr448.

This sequence belongs to the phosphoenolpyruvate carboxykinase (ATP) family. Mn(2+) serves as cofactor.

It is found in the cytoplasm. The catalysed reaction is oxaloacetate + ATP = phosphoenolpyruvate + ADP + CO2. It functions in the pathway carbohydrate biosynthesis; gluconeogenesis. Involved in the gluconeogenesis. Catalyzes the conversion of oxaloacetate (OAA) to phosphoenolpyruvate (PEP) through direct phosphoryl transfer between the nucleoside triphosphate and OAA. This is Phosphoenolpyruvate carboxykinase (ATP) from Rhodopseudomonas palustris (strain BisB5).